A 180-amino-acid polypeptide reads, in one-letter code: Decaprenylphosphoryl-5-phosphoribose phosphatase (180 aa).

The next 4 membrane-spanning stretches (helical) occupy residues 31–51 (ALSH…AGAL), 61–81 (LAVG…KRVV), 116–136 (VLLA…PMAL), and 139–159 (LVLG…GALV).

The protein belongs to the PA-phosphatase related phosphoesterase family.

It localises to the cell membrane. The enzyme catalyses trans,octa-cis-decaprenylphospho-beta-D-ribofuranose 5-phosphate + H2O = trans,octa-cis-decaprenylphospho-beta-D-ribofuranose + phosphate. Its pathway is cell wall biogenesis; cell wall polysaccharide biosynthesis. Phosphatase involved in the biosynthesis of decaprenylphosphoryl arabinose (DPA), which serves as the arabinose donor for the biosynthesis of arabinogalactan, the major mycobacterial cell wall polysaccharide. Catalyzes the dephosphorylation of decaprenylphosphoryl-5-phosphoribose (DPPR) to decaprenyl-phosphoribose (DPR). The chain is Decaprenylphosphoryl-5-phosphoribose phosphatase from Mycolicibacterium smegmatis (strain ATCC 700084 / mc(2)155) (Mycobacterium smegmatis).